Consider the following 63-residue polypeptide: Actiflagelin (63 aa).

5 cysteine pairs are disulfide-bonded: cysteine 3/cysteine 24, cysteine 6/cysteine 11, cysteine 17/cysteine 39, cysteine 43/cysteine 55, and cysteine 56/cysteine 61. Proline 63 carries the post-translational modification Proline amide.

In terms of processing, contains 5 disulfide bonds. In terms of tissue distribution, expressed by the venom gland.

It is found in the secreted. Unknown. In vitro, this toxin activates sperm motility when tested on OF1 male mice. The polypeptide is Actiflagelin (Walterinnesia aegyptia (Desert black snake)).